A 215-amino-acid polypeptide reads, in one-letter code: MVTAAMVKELRERTGAGMMECKKALAHTDGDMEKAVAYLRERGLAAAAKKASRVAAEGLVEAYIHGGGRIGVLVEVNCETDFVAKTDDYKALCKDIAMQIAAAKPEYVRREEVPAEQIEKEKEILRNQALNEGKPEKIVDKMVEGRIEKYFKEICLLEQPFIKNPDVTVQQMITEAVAKIGENINVRRFVRFELGEGLAKRQDDFASEVMAEINK.

The involved in Mg(2+) ion dislocation from EF-Tu stretch occupies residues 80 to 83; the sequence is TDFV.

The protein belongs to the EF-Ts family.

It localises to the cytoplasm. Functionally, associates with the EF-Tu.GDP complex and induces the exchange of GDP to GTP. It remains bound to the aminoacyl-tRNA.EF-Tu.GTP complex up to the GTP hydrolysis stage on the ribosome. This is Elongation factor Ts from Heliobacterium modesticaldum (strain ATCC 51547 / Ice1).